Consider the following 309-residue polypeptide: Olfactory receptor 6C4 (309 aa).

Over 1–23 (MKNRTMFGEFILLGLTNQPELQV) the chain is Extracellular. Residue N3 is glycosylated (N-linked (GlcNAc...) asparagine). Residues 24–44 (MIFIFLFLTYMLSILGNLTII) traverse the membrane as a helical segment. The Cytoplasmic portion of the chain corresponds to 45–52 (TLTLLDPH). A helical membrane pass occupies residues 53–73 (LQTPMYFFLRNFSFLEISFTS). The Extracellular portion of the chain corresponds to 74–97 (IFIPRFLTSMTTGNKVISFAGCLT). C95 and C187 are oxidised to a cystine. A helical membrane pass occupies residues 98-118 (QYFFAIFLGATEFYLLASMSY). Topologically, residues 119–137 (DRYVAICKPLHYLTIMSSR) are cytoplasmic. Residues 138 to 158 (VCIQLVFCSWLGGFLAILPPI) form a helical membrane-spanning segment. At 159 to 195 (ILMTQVDFCVSNILNHYYCDYGPLVELACSDTSLLEL) the chain is on the extracellular side. Residues 196–215 (MVILLAVVTLMVTLVLVTLS) traverse the membrane as a helical segment. Residues 216–235 (YTYIIRTILRIPSAQQRTKA) are Cytoplasmic-facing. A helical membrane pass occupies residues 236–256 (FSTCSSHMIVISLSYGSCMFM). Residues 257-269 (YINPSAKEGGAFN) are Extracellular-facing. A helical transmembrane segment spans residues 270-290 (KGIAVLITSVTPLLNPFIYTL). At 291–309 (RNQQVKQAFKDSVKKIVKL) the chain is on the cytoplasmic side.

This sequence belongs to the G-protein coupled receptor 1 family.

The protein resides in the cell membrane. Its function is as follows. Odorant receptor. The protein is Olfactory receptor 6C4 (OR6C4) of Homo sapiens (Human).